We begin with the raw amino-acid sequence, 185 residues long: Ribonuclease M5 (185 aa).

Residues 3-84 enclose the Toprim domain; sequence KEVIVVEGRD…KHARISQSEG (82 aa). E9, D55, and D57 together coordinate Mg(2+).

This sequence belongs to the ribonuclease M5 family. Requires Mg(2+) as cofactor.

The protein resides in the cytoplasm. It catalyses the reaction Endonucleolytic cleavage of RNA, removing 21 and 42 nucleotides, respectively, from the 5'- and 3'-termini of a 5S-rRNA precursor.. Functionally, required for correct processing of both the 5' and 3' ends of 5S rRNA precursor. Cleaves both sides of a double-stranded region yielding mature 5S rRNA in one step. The protein is Ribonuclease M5 of Clostridium acetobutylicum (strain ATCC 824 / DSM 792 / JCM 1419 / IAM 19013 / LMG 5710 / NBRC 13948 / NRRL B-527 / VKM B-1787 / 2291 / W).